The sequence spans 590 residues: MPKRKIAPNKESSRRTVSHDDLTPQIQEFQNLMDLESQKVENIRQSYSRQNSLLAKDNSILKIKVNSLEKKISQLVQENVTLRSKTSISEAIYRERLSNQLQVIENGIIQRFDEIFYMFENVRKNENLPSSSLRTMLKRTSSRSRSCSLSSPTYSKSYTRLSNHENNLSHESSFNKDDGPDLEPKAKKRKSSRRQSMFVSTSLEPEDETGENEPMMENSSVEVPAESHESAQVEETIDALNPEEENSDSVSNFTNSIIEYSIPEENPTEPEHSSSKLEIFNDSTNMLSTVPSNPLPLPLPGPSATLPTTTSDASTVYPSSSSSTNSHPKTKIKHSMKPPRIELKKKVIDEVMPVSNMSSNSEISFTRTRRTRGKAVDYTLPSLRAKMRRPSEKLVDATTVIDIHDLQVSKRNRETSHKRKSLSQDSIPDEPQLREVVVSKDYGTPKGKKTEDEIHEDTAHLMTTSNNNSNNKNEKKLTSNNSPKKSSPLLDITNKSENKKKSTRTKKLFKNAIVNNLSDENSTTRPSKSSKGTSNNNNNYNNFDNNNSNINNVNNKSVSFRLNEDDLAVFDLFGNGKAVKHQPKTYRTKK.

The segment at 1-20 (MPKRKIAPNKESSRRTVSHD) is disordered. The span at 11 to 20 (ESSRRTVSHD) shows a compositional bias: basic and acidic residues. Residues 25–86 (QIQEFQNLMD…QENVTLRSKT (62 aa)) adopt a coiled-coil conformation. 3 disordered regions span residues 133-235 (LRTM…QVEE), 291-337 (PSNP…HSMK), and 411-550 (RNRE…NSNI). Residues 173 to 185 (SFNKDDGPDLEPK) are compositionally biased toward basic and acidic residues. A compositionally biased stretch (low complexity) spans 302-326 (PSATLPTTTSDASTVYPSSSSSTNS). Positions 328–337 (PKTKIKHSMK) are enriched in basic residues. Residues 448–459 (KKTEDEIHEDTA) are compositionally biased toward basic and acidic residues. The span at 513 to 526 (IVNNLSDENSTTRP) shows a compositional bias: polar residues. The span at 527–550 (SKSSKGTSNNNNNYNNFDNNNSNI) shows a compositional bias: low complexity.

This sequence belongs to the shugoshin family. Ubiquitinated by the anaphase promoting complex (APC) at the onset of anaphase, conducting to its degradation.

It is found in the chromosome. The protein localises to the centromere. The protein resides in the kinetochore. Its subcellular location is the cytoplasm. It localises to the cytoskeleton. It is found in the spindle pole. Functionally, plays a central role in chromosome cohesion during mitosis and meiosis divisions by preventing premature dissociation of cohesin complex from centromeres after prophase, when most of cohesin complex dissociates from chromosomes arms. Probably act by protecting REC8 and RAD21 from separase degradation during anaphase. Also acts as a spindle checkpoint component required for sensing tension between sister chromatids during mitosis, its degradation when they separate preventing cell cycle arrest and chromosome loss in anaphase, a time when sister chromatids are no longer under tension. This Saccharomyces cerevisiae (strain ATCC 204508 / S288c) (Baker's yeast) protein is Shugoshin (SGO1).